We begin with the raw amino-acid sequence, 255 residues long: Probable membrane transporter protein HI_0198 (255 aa).

8 helical membrane-spanning segments follow: residues 7-27, 28-48, 76-96, 99-119, 132-152, 153-173, 191-211, and 235-255; these read LLAI…IAGG, GGLI…MALG, IWFI…LIQS, VAIF…YFLF, LSYL…DGFF, GPGT…FNLP, FALF…MMAG, and VVIM…WFHF.

This sequence belongs to the 4-toluene sulfonate uptake permease (TSUP) (TC 2.A.102) family.

The protein resides in the cell membrane. In Haemophilus influenzae (strain ATCC 51907 / DSM 11121 / KW20 / Rd), this protein is Probable membrane transporter protein HI_0198.